The following is a 548-amino-acid chain: Membrane protein insertase YidC (548 aa).

The helical transmembrane segment at 6-26 (NLLVIALLFVSFMIWQAWEQD) threads the bilayer. The interval 28-56 (NPQPQTQQTTQTTTTAAGSAADQGVPASG) is disordered. Residues 29–42 (PQPQTQQTTQTTTT) are compositionally biased toward low complexity. Transmembrane regions (helical) follow at residues 350-370 (FVGN…GIMY), 424-444 (FPLI…MGSI), 458-478 (LSAQ…MFFI), and 499-519 (PVIF…YYIV).

It belongs to the OXA1/ALB3/YidC family. Type 1 subfamily. In terms of assembly, interacts with the Sec translocase complex via SecD. Specifically interacts with transmembrane segments of nascent integral membrane proteins during membrane integration.

The protein resides in the cell inner membrane. Its function is as follows. Required for the insertion and/or proper folding and/or complex formation of integral membrane proteins into the membrane. Involved in integration of membrane proteins that insert both dependently and independently of the Sec translocase complex, as well as at least some lipoproteins. Aids folding of multispanning membrane proteins. This chain is Membrane protein insertase YidC, found in Salmonella heidelberg (strain SL476).